We begin with the raw amino-acid sequence, 188 residues long: Molybdopterin synthase catalytic subunit (188 aa).

Residues 1–14 (MTTQPPQDQTSTTP) show a composition bias toward low complexity. The segment at 1–23 (MTTQPPQDQTSTTPSLPPHLDPT) is disordered. Residues 134 to 135 (HR), Lys150, and 157 to 159 (KRE) contribute to the substrate site.

This sequence belongs to the MoaE family. MOCS2B subfamily. As to quaternary structure, heterotetramer; composed of 2 small (MOCS2A) and 2 large (MOCS2B) subunits.

Its subcellular location is the cytoplasm. It catalyses the reaction 2 [molybdopterin-synthase sulfur-carrier protein]-C-terminal-Gly-aminoethanethioate + cyclic pyranopterin phosphate + H2O = molybdopterin + 2 [molybdopterin-synthase sulfur-carrier protein]-C-terminal Gly-Gly + 2 H(+). It functions in the pathway cofactor biosynthesis; molybdopterin biosynthesis. Its function is as follows. Catalytic subunit of the molybdopterin synthase complex, a complex that catalyzes the conversion of precursor Z into molybdopterin. Acts by mediating the incorporation of 2 sulfur atoms from thiocarboxylated MOCS2A into precursor Z to generate a dithiolene group. This chain is Molybdopterin synthase catalytic subunit, found in Neosartorya fischeri (strain ATCC 1020 / DSM 3700 / CBS 544.65 / FGSC A1164 / JCM 1740 / NRRL 181 / WB 181) (Aspergillus fischerianus).